A 660-amino-acid chain; its full sequence is MKAVIFAYHDMGCVGVTALINAGYTIEAIITHPDAPSEKTFFGSVARIAAEHNIPVFVPDDVNHPLWIARIKALAPDVIFSFYYRQLLCQDILSLPTVGAFNLHGSLLPRYRGRSPLNWVLVNGEQETGVTLHRMTARADAGAILAQRSVAITLQDDALTLHRKLCEAAAGVLEKVLPAIREQRCTETPQDESIASYVGHRTPEDGRIDWGQPAATLANLVRAVTDPWPGAFSYAGGEKFIIWKAQVRPNSADAQPGTVLSIDPLVIACGSDALEVQTGQSQQGVYMQGGQLAHALGLVKGALLNPRPLVSHKRRTRVLILGVNGFIGNHLTERLLRDGNYEIYGLDIGTDAISRFMVNPLFHFVEGDISIHSEWIEYHIKKCDIVLPLVAIATPIEYTRNPLRVFELDFEENLKIIRHCVKYQKRIIFPSTSEVYGMCTDPVFDEDDSSLIVGPINKQRWIYSVSKQLLDRVLWAYGEKEGLRFTLFRPFNWMGPRLDNLNAARIGSSRAITQLILNLVEGSHIKLVDGGAQKRCFTDISDGIEALFRIIENKDNNCDGQIINIGNPDNEASIRQLAELLLASFERHPLRQHFPPFAGFRDVESSSYYGKGYQDVEHRKPSIRNAKRLLGWAPSVPMAQTIDETLDFFLQTVDLPDAAQ.

The formyltransferase ArnAFT stretch occupies residues 1 to 304; it reads MKAVIFAYHD…ALGLVKGALL (304 aa). Residue His104 is the Proton donor; for formyltransferase activity of the active site. (6R)-10-formyltetrahydrofolate is bound by residues Arg114 and 136–140; that span reads TARAD. The dehydrogenase ArnADH stretch occupies residues 314–660; the sequence is RRTRVLILGV…QTVDLPDAAQ (347 aa). NAD(+) is bound by residues Asp347 and 368-369; that span reads DI. UDP-alpha-D-glucuronate is bound by residues Ala393, Tyr398, and 432–433; that span reads TS. The active-site Proton acceptor; for decarboxylase activity is the Glu434. Residues Arg460, Asn492, 526–535, and Tyr613 contribute to the UDP-alpha-D-glucuronate site; that span reads KLVDGGAQKR. Arg619 functions as the Proton donor; for decarboxylase activity in the catalytic mechanism.

In the N-terminal section; belongs to the Fmt family. UDP-L-Ara4N formyltransferase subfamily. This sequence in the C-terminal section; belongs to the NAD(P)-dependent epimerase/dehydratase family. UDP-glucuronic acid decarboxylase subfamily. As to quaternary structure, homohexamer, formed by a dimer of trimers.

The enzyme catalyses UDP-alpha-D-glucuronate + NAD(+) = UDP-beta-L-threo-pentopyranos-4-ulose + CO2 + NADH. It carries out the reaction UDP-4-amino-4-deoxy-beta-L-arabinose + (6R)-10-formyltetrahydrofolate = UDP-4-deoxy-4-formamido-beta-L-arabinose + (6S)-5,6,7,8-tetrahydrofolate + H(+). It functions in the pathway nucleotide-sugar biosynthesis; UDP-4-deoxy-4-formamido-beta-L-arabinose biosynthesis; UDP-4-deoxy-4-formamido-beta-L-arabinose from UDP-alpha-D-glucuronate: step 1/3. The protein operates within nucleotide-sugar biosynthesis; UDP-4-deoxy-4-formamido-beta-L-arabinose biosynthesis; UDP-4-deoxy-4-formamido-beta-L-arabinose from UDP-alpha-D-glucuronate: step 3/3. Its pathway is bacterial outer membrane biogenesis; lipopolysaccharide biosynthesis. Functionally, bifunctional enzyme that catalyzes the oxidative decarboxylation of UDP-glucuronic acid (UDP-GlcUA) to UDP-4-keto-arabinose (UDP-Ara4O) and the addition of a formyl group to UDP-4-amino-4-deoxy-L-arabinose (UDP-L-Ara4N) to form UDP-L-4-formamido-arabinose (UDP-L-Ara4FN). The modified arabinose is attached to lipid A and is required for resistance to polymyxin and cationic antimicrobial peptides. The sequence is that of Bifunctional polymyxin resistance protein ArnA from Sodalis glossinidius (strain morsitans).